Here is a 128-residue protein sequence, read N- to C-terminus: Large ribosomal subunit protein eL8 (128 aa).

Belongs to the eukaryotic ribosomal protein eL8 family. Part of the 50S ribosomal subunit. Probably part of the RNase P complex.

It is found in the cytoplasm. Functionally, multifunctional RNA-binding protein that recognizes the K-turn motif in ribosomal RNA, the RNA component of RNase P, box H/ACA, box C/D and box C'/D' sRNAs. This is Large ribosomal subunit protein eL8 from Staphylothermus marinus (strain ATCC 43588 / DSM 3639 / JCM 9404 / F1).